Reading from the N-terminus, the 115-residue chain is MNPLIQSLTEGQLRSDVPNFRPGDTVRVHAKVVEGTRERIQIFEGVVISRKGQGISEMYTVRKISGGIGVERTFPIHTPRVDKIEVIRHGKVRRAKLYYLRALQGKAARIKEIRR.

The protein belongs to the bacterial ribosomal protein bL19 family.

In terms of biological role, this protein is located at the 30S-50S ribosomal subunit interface and may play a role in the structure and function of the aminoacyl-tRNA binding site. The chain is Large ribosomal subunit protein bL19 from Streptococcus pyogenes serotype M49 (strain NZ131).